The sequence spans 389 residues: Acetylornithine aminotransferase (389 aa).

Pyridoxal 5'-phosphate is bound by residues 96–97 and Phe123; that span reads GT. Residue Arg126 participates in N(2)-acetyl-L-ornithine binding. 207–210 is a pyridoxal 5'-phosphate binding site; it reads DEVQ. Lys236 is subject to N6-(pyridoxal phosphate)lysine. Residue Ser264 participates in N(2)-acetyl-L-ornithine binding. Thr265 lines the pyridoxal 5'-phosphate pocket.

It belongs to the class-III pyridoxal-phosphate-dependent aminotransferase family. ArgD subfamily. In terms of assembly, homodimer. Requires pyridoxal 5'-phosphate as cofactor.

The protein localises to the cytoplasm. The enzyme catalyses N(2)-acetyl-L-ornithine + 2-oxoglutarate = N-acetyl-L-glutamate 5-semialdehyde + L-glutamate. Its pathway is amino-acid biosynthesis; L-arginine biosynthesis; N(2)-acetyl-L-ornithine from L-glutamate: step 4/4. The chain is Acetylornithine aminotransferase from Lactiplantibacillus plantarum (strain ATCC BAA-793 / NCIMB 8826 / WCFS1) (Lactobacillus plantarum).